Reading from the N-terminus, the 811-residue chain is Potassium transporter 7 (811 aa).

Residues 1–52 (MPSYQYLLSLLFYILDCTDRFSVIVTIHNHRVGVLMIVLLQDQWKSYCRTIS) lie on the Cytoplasmic side of the membrane. Residues 53–73 (LLAFQSFGVVYGDLSTSPLYV) traverse the membrane as a helical segment. The Extracellular portion of the chain corresponds to 74 to 93 (YKSAFSGRLNNYRDETTIFG). Residues 94-114 (LFSLIFWTLTLLPLLKYVIIV) form a helical membrane-spanning segment. Over 115–181 (LNADDNGEGG…EKHRKLRTCL (67 aa)) the chain is Cytoplasmic. A helical transmembrane segment spans residues 182-202 (LLFVLFGACMVIGDGVFTPAI). At 203-217 (SVLSAISGLKDPGPG) the chain is on the extracellular side. A helical transmembrane segment spans residues 218 to 238 (GIPDGWVVFIACIVLVGLFAL). The Cytoplasmic segment spans residues 239 to 245 (QHRGTHR). The chain crosses the membrane as a helical span at residues 246-266 (VAFMFAPIVVVWLLSIGVIGL). The Extracellular segment spans residues 267–296 (YNIIHWNHRIFLALSPHYVIKFFKMTGKDG). A helical transmembrane segment spans residues 297–317 (WLSLGGVLLAITGTEAMFADL). Over 318–326 (GHFTAASIR) the chain is Cytoplasmic. A helical membrane pass occupies residues 327–347 (LAFVGAIYPCLVLQYMGQAAF). Residues 348–366 (LSRNMSAVEDSFYQSVPRS) are Extracellular-facing. N-linked (GlcNAc...) asparagine glycosylation occurs at N351. Residues 367–387 (LFWPVFVIATLAAVVGSQSII) form a helical membrane-spanning segment. Topologically, residues 388-418 (SATFSIVKQCLSLGCFPRVKVVHTSRWIHGQ) are cytoplasmic. The chain crosses the membrane as a helical span at residues 419 to 439 (IYIPEINWILMVLCLAVTLGF). Residues 440–450 (RDTTVIGNAYG) lie on the Extracellular side of the membrane. The chain crosses the membrane as a helical span at residues 451 to 471 (LACIVVMFVTTWLMALVIIFV). Residues 472-475 (WQKN) are Cytoplasmic-facing. Residues 476–496 (ILLALLFVVAFGSIEVVYLSA) form a helical membrane-spanning segment. The Extracellular segment spans residues 497–503 (AVTKVPQ). The helical transmembrane segment at 504 to 524 (GGWAPIVFAFVFMLVMYVWHY) threads the bilayer. Residues 525–811 (GSRRKYLFDL…LVEVGMIYYV (287 aa)) lie on the Cytoplasmic side of the membrane. Residues 680 to 702 (TGLVMRDSNNEASGTSLTRSSRS) are disordered.

Belongs to the HAK/KUP transporter (TC 2.A.72.3) family. Expressed in roots and shoots.

It localises to the membrane. In terms of biological role, high-affinity potassium transporter. In Oryza sativa subsp. japonica (Rice), this protein is Potassium transporter 7 (HAK7).